A 267-amino-acid chain; its full sequence is Glutamate 5-kinase (267 aa).

An ATP-binding site is contributed by K14. Substrate contacts are provided by S54, D141, and N157. Residues 177-178 and 219-225 contribute to the ATP site; these read SD and TGGMLSK.

It belongs to the glutamate 5-kinase family.

The protein resides in the cytoplasm. The enzyme catalyses L-glutamate + ATP = L-glutamyl 5-phosphate + ADP. It functions in the pathway amino-acid biosynthesis; L-proline biosynthesis; L-glutamate 5-semialdehyde from L-glutamate: step 1/2. Catalyzes the transfer of a phosphate group to glutamate to form L-glutamate 5-phosphate. The sequence is that of Glutamate 5-kinase from Streptococcus agalactiae serotype Ia (strain ATCC 27591 / A909 / CDC SS700).